A 119-amino-acid polypeptide reads, in one-letter code: Large ribosomal subunit protein bL20 (119 aa).

This sequence belongs to the bacterial ribosomal protein bL20 family.

Functionally, binds directly to 23S ribosomal RNA and is necessary for the in vitro assembly process of the 50S ribosomal subunit. It is not involved in the protein synthesizing functions of that subunit. The sequence is that of Large ribosomal subunit protein bL20 from Xylella fastidiosa (strain M23).